Consider the following 278-residue polypeptide: MKLPPVFVFELVENQGLANIALIRPRVIAPDNNLRPGGIVSGIAGLLTLGQENRNLISENRQVINNNTTAIGQNSDRIDANAKGVADNRAAIGQNSGRIDANAKGVADNKAAIGRNSGRIDANAKGVADNKTAIGRNSGRIDTNAKGVADNRAAISQNRGRINANAAGVASNRAAIRQNSAAISALGQRVDGLQGQINSARKEARAGAANAAALSGLRYDNRPGKVSIATGVGGFKGSTALAAGIGYTSKNENARYNVSVAYNEAGTSWNAGASFTLN.

A signal peptide spans 1 to 29; that stretch reads MKLPPVFVFELVENQGLANIALIRPRVIA. Positions 30–182 are surface exposed passenger domain; that stretch reads PDNNLRPGGI…RAAIRQNSAA (153 aa). Positions 186–224 are outer membrane translocation of the passenger domain; sequence LGQRVDGLQGQINSARKEARAGAANAAALSGLRYDNRPG. Residues 225 to 278 form a translocator domain region; it reads KVSIATGVGGFKGSTALAAGIGYTSKNENARYNVSVAYNEAGTSWNAGASFTLN.

Belongs to the autotransporter-2 (AT-2) (TC 1.B.40) family. In terms of assembly, homotrimer.

The protein localises to the cell surface. The protein resides in the cell outer membrane. Its function is as follows. Participates in bacterial attachment to several surfaces, including various extracellular matrix (ECM) components and a hydrophobic abiotic surface. Involved in adhesion to host epithelial cells and is required for full virulence in mice. Also implicated in the resistance to porcine serum. In Brucella suis biovar 1 (strain 1330), this protein is Autotransporter adhesin BtaF.